The sequence spans 215 residues: Ribonuclease T (215 aa).

The Exonuclease domain occupies Val21–Phe195. Positions 24, 26, 182, and 187 each coordinate Mg(2+). His182 acts as the Proton donor/acceptor in catalysis.

This sequence belongs to the RNase T family. Homodimer. Requires Mg(2+) as cofactor.

Functionally, trims short 3' overhangs of a variety of RNA species, leaving a one or two nucleotide 3' overhang. Responsible for the end-turnover of tRNA: specifically removes the terminal AMP residue from uncharged tRNA (tRNA-C-C-A). Also appears to be involved in tRNA biosynthesis. The chain is Ribonuclease T from Wigglesworthia glossinidia brevipalpis.